The following is a 122-amino-acid chain: Small ribosomal subunit protein uS13 (122 aa).

A compositionally biased stretch (basic residues) spans 95-116 (GLPVRGQKTKTNARTRKGRRKT). Residues 95–122 (GLPVRGQKTKTNARTRKGRRKTVGAATK) form a disordered region.

The protein belongs to the universal ribosomal protein uS13 family. Part of the 30S ribosomal subunit. Forms a loose heterodimer with protein S19. Forms two bridges to the 50S subunit in the 70S ribosome.

Located at the top of the head of the 30S subunit, it contacts several helices of the 16S rRNA. In the 70S ribosome it contacts the 23S rRNA (bridge B1a) and protein L5 of the 50S subunit (bridge B1b), connecting the 2 subunits; these bridges are implicated in subunit movement. Contacts the tRNAs in the A and P-sites. This is Small ribosomal subunit protein uS13 from Campylobacter curvus (strain 525.92).